The following is a 244-amino-acid chain: rRNA adenine N-6-methyltransferase (244 aa).

Positions 11, 13, 38, 59, 84, and 101 each coordinate S-adenosyl-L-methionine.

It belongs to the class I-like SAM-binding methyltransferase superfamily. rRNA adenine N(6)-methyltransferase family.

The enzyme catalyses adenosine(2085) in 23S rRNA + 2 S-adenosyl-L-methionine = N(6)-dimethyladenosine(2085) in 23S rRNA + 2 S-adenosyl-L-homocysteine + 2 H(+). In terms of biological role, this protein produces a dimethylation of the adenine residue at position 2085 in 23S rRNA, resulting in reduced affinity between ribosomes and macrolide-lincosamide-streptogramin B antibiotics. Is involved in erythromycin resistance. The protein is rRNA adenine N-6-methyltransferase (ermGT) of Limosilactobacillus reuteri (Lactobacillus reuteri).